Reading from the N-terminus, the 126-residue chain is Large ribosomal subunit protein bL17 (126 aa).

It belongs to the bacterial ribosomal protein bL17 family. In terms of assembly, part of the 50S ribosomal subunit. Contacts protein L32.

The polypeptide is Large ribosomal subunit protein bL17 (Lysinibacillus sphaericus (strain C3-41)).